Here is an 841-residue protein sequence, read N- to C-terminus: GRIP1-associated protein 1 (841 aa).

Ala-2 carries the post-translational modification N-acetylalanine. 2 coiled-coil regions span residues 4-161 and 208-641; these read ALSE…YGKE and EQLQ…NSKS. 2 disordered regions span residues 532–551 and 558–580; these read AEES…KQCR and LKGK…EERD. 8 positions are modified to phosphoserine: Ser-655, Ser-666, Ser-668, Ser-669, Ser-688, Ser-690, Ser-691, and Ser-692. The tract at residues 681-706 is disordered; sequence SSAVPARSLSSSPQAQPPRPAELSDE. Residues 682-694 show a composition bias toward low complexity; that stretch reads SAVPARSLSSSPQ. Coiled-coil stretches lie at residues 701 to 735 and 785 to 814; these read AELS…LEVS and DENL…KDME.

Interacts with GRIP1, GRIP2 and AMPA receptors. Interacts (via C-terminus) with MAPK8/JNK1 and MAP3K1/MEKK1; the interaction promotes MAP3K1-mediated phosphorylation of MAPK8. Interacts (via N-terminus) with RAB4A (in GTP-bound form). Interacts (via C-terminus) with STX12. Post-translationally, proteolytically cleaved by caspase-3. A minor C-terminal proteolytic fragment of 30 kDa is produced. Proteolytic cleavage is required for JNK signaling activation.

It localises to the early endosome membrane. Its subcellular location is the recycling endosome membrane. The protein localises to the cell projection. It is found in the axon. The protein resides in the dendrite. It localises to the synapse. Functionally, regulates the endosomal recycling back to the neuronal plasma membrane, possibly by connecting early and late recycling endosomal domains and promoting segregation of recycling endosomes from early endosomal membranes. Involved in the localization of recycling endosomes to dendritic spines, thereby playing a role in the maintenance of dendritic spine morphology. Required for the activity-induced AMPA receptor recycling to dendrite membranes and for long-term potentiation and synaptic plasticity. Its function is as follows. Functions as a scaffold protein to facilitate MAP3K1/MEKK1-mediated activation of the JNK1 kinase by phosphorylation, possibly by bringing MAP3K1/MEKK1 and JNK1 in close proximity. This is GRIP1-associated protein 1 from Homo sapiens (Human).